Here is a 109-residue protein sequence, read N- to C-terminus: Small serum protein 2 (109 aa).

Positions 1-19 (MRVFFSLIIFSFMLATCQG) are cleaved as a signal peptide. Intrachain disulfides connect C21–C72, C39–C64, C59–C93, C62–C71, and C84–C107.

Forms a stable, non-covalent complex with serotriflin.

The protein localises to the secreted. Its function is as follows. May serve as a self-defense protein against the toxic effects of the snake venom during accidental envenomation. Does not show inhibitory activity towards brevilysin H6. The protein is Small serum protein 2 of Protobothrops flavoviridis (Habu).